We begin with the raw amino-acid sequence, 244 residues long: 14-3-3 protein beta/alpha (244 aa).

An N-acetylmethionine modification is found at Met1. A Phosphoserine modification is found at Ser184.

It belongs to the 14-3-3 family. As to quaternary structure, homodimer, and heterodimer with other family members. Phosphorylated.

It localises to the cytoplasm. Adapter protein implicated in the regulation of a large spectrum of both general and specialized signaling pathways. Binds to a large number of partners, usually by recognition of a phosphoserine or phosphothreonine motif. Binding generally results in the modulation of the activity of the binding partner. The sequence is that of 14-3-3 protein beta/alpha (YWHAB) from Gallus gallus (Chicken).